The sequence spans 658 residues: Threonine--tRNA ligase (658 aa).

In terms of domain architecture, TGS spans 1–61 (MSDVRVIIQR…KDGETVEAVE (61 aa)). Residues 259 to 554 (DHRKLGSELD…LLEHYAGAMP (296 aa)) form a catalytic region. Residues Cys353, His404, and His531 each coordinate Zn(2+).

The protein belongs to the class-II aminoacyl-tRNA synthetase family. Homodimer. Requires Zn(2+) as cofactor.

Its subcellular location is the cytoplasm. The enzyme catalyses tRNA(Thr) + L-threonine + ATP = L-threonyl-tRNA(Thr) + AMP + diphosphate + H(+). Catalyzes the attachment of threonine to tRNA(Thr) in a two-step reaction: L-threonine is first activated by ATP to form Thr-AMP and then transferred to the acceptor end of tRNA(Thr). Also edits incorrectly charged L-seryl-tRNA(Thr). This chain is Threonine--tRNA ligase, found in Streptomyces coelicolor (strain ATCC BAA-471 / A3(2) / M145).